The following is a 316-amino-acid chain: tRNA dimethylallyltransferase (316 aa).

Gly-19–Thr-26 is a binding site for ATP. Residue Thr-21–Thr-26 coordinates substrate. Interaction with substrate tRNA stretches follow at residues Asp-44–Leu-47, Gln-168–Arg-172, and Arg-249–Arg-254.

The protein belongs to the IPP transferase family. Monomer. It depends on Mg(2+) as a cofactor.

It carries out the reaction adenosine(37) in tRNA + dimethylallyl diphosphate = N(6)-dimethylallyladenosine(37) in tRNA + diphosphate. In terms of biological role, catalyzes the transfer of a dimethylallyl group onto the adenine at position 37 in tRNAs that read codons beginning with uridine, leading to the formation of N6-(dimethylallyl)adenosine (i(6)A). The polypeptide is tRNA dimethylallyltransferase (Colwellia psychrerythraea (strain 34H / ATCC BAA-681) (Vibrio psychroerythus)).